The chain runs to 93 residues: Probable chloroethene reductive dehalogenase membrane anchor protein (93 aa).

The next 3 membrane-spanning stretches (helical) occupy residues Ala3–Phe23, Trp35–Ser55, and Ser64–Ala84.

Belongs to the PceB family.

The protein localises to the cell membrane. Functionally, may act as a membrane anchor for the chloroethene reductive dehalogenase VcrA. The protein is Probable chloroethene reductive dehalogenase membrane anchor protein of Dehalococcoides mccartyi (strain VS).